Reading from the N-terminus, the 67-residue chain is Large ribosomal subunit protein uL29 (67 aa).

Belongs to the universal ribosomal protein uL29 family.

In Ruminiclostridium cellulolyticum (strain ATCC 35319 / DSM 5812 / JCM 6584 / H10) (Clostridium cellulolyticum), this protein is Large ribosomal subunit protein uL29.